We begin with the raw amino-acid sequence, 223 residues long: Transcriptional regulatory protein HprR (223 aa).

The Response regulatory domain maps to 2-115; that stretch reads KILLIEDNQR…ELLARVRAQL (114 aa). D51 is modified (4-aspartylphosphate). Positions 122 to 220 form a DNA-binding region, ompR/PhoB-type; the sequence is NSTLEISGLR…IRGMGYSFVA (99 aa).

Post-translationally, phosphorylated by HprS.

The protein localises to the cytoplasm. Functionally, member of a two-component regulatory system HprR/HprS involved in response to hydrogen peroxide. Regulates the expression of at least 5 operons, cyoABCDE, hprRS, hiuH, cusRS and cusCFBA. Bifunctional regulator that acts as an activator and a repressor. This chain is Transcriptional regulatory protein HprR, found in Escherichia coli (strain K12).